Reading from the N-terminus, the 371-residue chain is DNA repair and recombination protein rti1 (371 aa).

Residues Ile-346 to Lys-371 form a disordered region. Over residues Ser-358–Lys-371 the composition is skewed to polar residues.

This sequence belongs to the RAD52 family. As to quaternary structure, interacts with rph51 and rph54.

Its function is as follows. Active in the repair of DNA damage and in mating-type switching. Probably involved in the repair of DNA double-strands breaks. Has a role in promoting S phase completion. The chain is DNA repair and recombination protein rti1 (rti1) from Schizosaccharomyces pombe (strain 972 / ATCC 24843) (Fission yeast).